Consider the following 98-residue polypeptide: Small ribosomal subunit protein bS16 (98 aa).

This sequence belongs to the bacterial ribosomal protein bS16 family.

The sequence is that of Small ribosomal subunit protein bS16 from Pseudothermotoga lettingae (strain ATCC BAA-301 / DSM 14385 / NBRC 107922 / TMO) (Thermotoga lettingae).